Consider the following 434-residue polypeptide: Glutamate-1-semialdehyde 2,1-aminomutase (434 aa).

Lys-266 carries the N6-(pyridoxal phosphate)lysine modification.

The protein belongs to the class-III pyridoxal-phosphate-dependent aminotransferase family. HemL subfamily. As to quaternary structure, homodimer. The cofactor is pyridoxal 5'-phosphate.

The protein resides in the cytoplasm. It carries out the reaction (S)-4-amino-5-oxopentanoate = 5-aminolevulinate. Its pathway is porphyrin-containing compound metabolism; protoporphyrin-IX biosynthesis; 5-aminolevulinate from L-glutamyl-tRNA(Glu): step 2/2. The polypeptide is Glutamate-1-semialdehyde 2,1-aminomutase (Fusobacterium nucleatum subsp. nucleatum (strain ATCC 25586 / DSM 15643 / BCRC 10681 / CIP 101130 / JCM 8532 / KCTC 2640 / LMG 13131 / VPI 4355)).